The sequence spans 88 residues: Large ribosomal subunit protein bL27 (88 aa).

The segment at 1-21 (MAHKKGASSSRNGRDSNAKRL) is disordered.

Belongs to the bacterial ribosomal protein bL27 family.

The chain is Large ribosomal subunit protein bL27 from Thermobifida fusca (strain YX).